A 243-amino-acid polypeptide reads, in one-letter code: ADP-ribosylation factor-like protein 10 (243 aa).

Residues 83–90 (GLDGSGKS), 127–131 (EIGGS), and 184–187 (NKQD) each bind GTP.

It belongs to the small GTPase superfamily. Arf family.

This chain is ADP-ribosylation factor-like protein 10 (Arl10), found in Mus musculus (Mouse).